We begin with the raw amino-acid sequence, 293 residues long: ELMO domain-containing protein 2 (293 aa).

The ELMO domain maps to 126–282; it reads QHEELLMKLW…KFHEKIKGLL (157 aa).

As to expression, alveolar cells (morphologically type II cells) and alveolar macrophages (at protein level). Expressed in brain, colon, heart, kidney, liver, lung, muscle, placenta, small intestine, spleen, stomach and testis. In lung it is expressed in alveolar macrophages and alveolar walls.

Acts as a GTPase-activating protein (GAP) toward guanine nucleotide exchange factors like ARL2, ARL3, ARF1 and ARF6, but not for GTPases outside the Arf family. Regulates IFN-related antiviral responses. The protein is ELMO domain-containing protein 2 (ELMOD2) of Homo sapiens (Human).